The chain runs to 388 residues: Succinyl-diaminopimelate desuccinylase (388 aa).

Position 74 (H74) interacts with Zn(2+). D76 is an active-site residue. D107 provides a ligand contact to Zn(2+). E142 (proton acceptor) is an active-site residue. Residues E143, E171, and H360 each contribute to the Zn(2+) site.

Belongs to the peptidase M20A family. DapE subfamily. Homodimer. Requires Zn(2+) as cofactor. It depends on Co(2+) as a cofactor.

The enzyme catalyses N-succinyl-(2S,6S)-2,6-diaminopimelate + H2O = (2S,6S)-2,6-diaminopimelate + succinate. Its pathway is amino-acid biosynthesis; L-lysine biosynthesis via DAP pathway; LL-2,6-diaminopimelate from (S)-tetrahydrodipicolinate (succinylase route): step 3/3. Its function is as follows. Catalyzes the hydrolysis of N-succinyl-L,L-diaminopimelic acid (SDAP), forming succinate and LL-2,6-diaminopimelate (DAP), an intermediate involved in the bacterial biosynthesis of lysine and meso-diaminopimelic acid, an essential component of bacterial cell walls. In Rhodopseudomonas palustris (strain BisB5), this protein is Succinyl-diaminopimelate desuccinylase.